The sequence spans 338 residues: Peroxidase 15 (338 aa).

Residues 1–22 (MARIGSFLIILYLIYALTLCIC) form the signal peptide. 4 disulfide bridges follow: cysteine 45-cysteine 125, cysteine 78-cysteine 83, cysteine 131-cysteine 332, and cysteine 210-cysteine 242. The Proton acceptor role is filled by histidine 76. Positions 77, 80, 82, 84, and 86 each coordinate Ca(2+). Proline 173 serves as a coordination point for substrate. N-linked (GlcNAc...) asparagine glycosylation is present at asparagine 176. Histidine 203 provides a ligand contact to heme b. Residue threonine 204 coordinates Ca(2+). 2 N-linked (GlcNAc...) asparagine glycosylation sites follow: asparagine 219 and asparagine 250. Residues aspartate 255, serine 258, and aspartate 263 each contribute to the Ca(2+) site.

The protein belongs to the peroxidase family. Classical plant (class III) peroxidase subfamily. Heme b is required as a cofactor. The cofactor is Ca(2+).

The protein resides in the secreted. It catalyses the reaction 2 a phenolic donor + H2O2 = 2 a phenolic radical donor + 2 H2O. Removal of H(2)O(2), oxidation of toxic reductants, biosynthesis and degradation of lignin, suberization, auxin catabolism, response to environmental stresses such as wounding, pathogen attack and oxidative stress. These functions might be dependent on each isozyme/isoform in each plant tissue. The protein is Peroxidase 15 (PER15) of Arabidopsis thaliana (Mouse-ear cress).